Reading from the N-terminus, the 332-residue chain is MSEPVLMDRFARKVDYLRMSVTDRCDFRCVYCMAEEMTFLPRQQILSLEEILQVAERFVALGTRKIRLTGGEPLVRAGVVGLCEKIAALPGLRELCMTTNGSQLDKLAAPLFKAGVTRLNISLDSLDPQRFRELTRTGDLHKVIAGIDAANAAGFVHTKLNCVVMHGRNDDEINDLLAFAIDRNLDVSFIEEMPLGIISEHSRAESFYSSDQVRERIAERYTLVPSTDSTQGPSRYWRLAEAPGIRIGFISPHSHNFCGTCNRVRMTVEGRLLLCLGNEHSVDLKAVLRANPGQPEKLEKAIIDAMQLKPWSHNFTHDDGVQVVRFMNMTGG.

The Radical SAM core domain maps to 9–220; it reads RFARKVDYLR…DQVRERIAER (212 aa). Arg18 is a binding site for GTP. The [4Fe-4S] cluster site is built by Cys25 and Cys29. Residue Tyr31 coordinates S-adenosyl-L-methionine. Cys32 is a binding site for [4Fe-4S] cluster. Arg67 is a GTP binding site. Residue Gly71 coordinates S-adenosyl-L-methionine. Thr98 is a GTP binding site. Ser122 provides a ligand contact to S-adenosyl-L-methionine. Lys159 provides a ligand contact to GTP. Met193 is an S-adenosyl-L-methionine binding site. Positions 258 and 261 each coordinate [4Fe-4S] cluster. GTP is bound at residue 263–265; the sequence is RVR. Position 275 (Cys275) interacts with [4Fe-4S] cluster.

Belongs to the radical SAM superfamily. MoaA family. In terms of assembly, monomer and homodimer. The cofactor is [4Fe-4S] cluster.

The catalysed reaction is GTP + AH2 + S-adenosyl-L-methionine = (8S)-3',8-cyclo-7,8-dihydroguanosine 5'-triphosphate + 5'-deoxyadenosine + L-methionine + A + H(+). It participates in cofactor biosynthesis; molybdopterin biosynthesis. Its function is as follows. Catalyzes the cyclization of GTP to (8S)-3',8-cyclo-7,8-dihydroguanosine 5'-triphosphate. The polypeptide is GTP 3',8-cyclase (Pseudomonas syringae pv. syringae (strain B728a)).